A 174-amino-acid chain; its full sequence is Keratin-associated protein 9-2 (174 aa).

17 consecutive repeat copies span residues 8 to 12, 13 to 17, 18 to 22, 37 to 41, 42 to 46, 51 to 55, 61 to 65, 66 to 70, 75 to 79, 80 to 84, 85 to 89, 90 to 94, 95 to 99, 144 to 148, 149 to 153, 154 to 158, and 168 to 172. A 17 X 5 AA repeats of C-C-[RQVSGE]-[SPTQ]-[TASP] region spans residues 8 to 172; the sequence is CCQPTCCRTT…TCVSSCCQPS (165 aa).

It belongs to the KRTAP type 9 family. Interacts with hair keratins.

In terms of biological role, in the hair cortex, hair keratin intermediate filaments are embedded in an interfilamentous matrix, consisting of hair keratin-associated proteins (KRTAP), which are essential for the formation of a rigid and resistant hair shaft through their extensive disulfide bond cross-linking with abundant cysteine residues of hair keratins. The matrix proteins include the high-sulfur and high-glycine-tyrosine keratins. The polypeptide is Keratin-associated protein 9-2 (KRTAP9-2) (Homo sapiens (Human)).